Here is a 384-residue protein sequence, read N- to C-terminus: tRNA-specific 2-thiouridylase MnmA (384 aa).

Residues 30–37 (GMSGGVDS) and M56 contribute to the ATP site. An interaction with target base in tRNA region spans residues 116 to 118 (NPD). Catalysis depends on C121, which acts as the Nucleophile. The cysteines at positions 121 and 218 are disulfide-linked. G146 contributes to the ATP binding site. Residues 168 to 170 (KDQ) form an interaction with tRNA region. The active-site Cysteine persulfide intermediate is C218. The interaction with tRNA stretch occupies residues 330 to 331 (RY).

This sequence belongs to the MnmA/TRMU family.

Its subcellular location is the cytoplasm. It carries out the reaction S-sulfanyl-L-cysteinyl-[protein] + uridine(34) in tRNA + AH2 + ATP = 2-thiouridine(34) in tRNA + L-cysteinyl-[protein] + A + AMP + diphosphate + H(+). Its function is as follows. Catalyzes the 2-thiolation of uridine at the wobble position (U34) of tRNA, leading to the formation of s(2)U34. This is tRNA-specific 2-thiouridylase MnmA from Haemophilus ducreyi (strain 35000HP / ATCC 700724).